We begin with the raw amino-acid sequence, 284 residues long: MVLMIVSGRSGSGKSVALRALEDMGFYCVDNLPVVLLPDLAHSLAERNMSAAVSIDVRNMPESPEVFENALTSLPDSFSPQLLFLDADRNTLIRRYSDTRRLHPLSSKNLSLESAIDEENVLLEPLRSRADLIIDTSEMSVHELAEMLRTRLLGKRERELTMVFESFGFKHGIPIDADYVFDVRFLPNPHWDPKLRPMTGLDRPVAAFLDRHTEVHNFIYQTRSYLELWLPMLETNNRSYLTVAIGCTGGKHRSVYIAEQLADYFRSRGKNVQSRHRTLEKRRS.

8–15 (GRSGSGKS) provides a ligand contact to ATP. Position 56-59 (56-59 (DVRN)) interacts with GTP. The interval 266 to 284 (RSRGKNVQSRHRTLEKRRS) is RNA-binding.

The protein belongs to the RapZ-like family. RapZ subfamily. As to quaternary structure, homotrimer.

Functionally, modulates the synthesis of GlmS, by affecting the processing and stability of the regulatory small RNA GlmZ. When glucosamine-6-phosphate (GlcN6P) concentrations are high in the cell, RapZ binds GlmZ and targets it to cleavage by RNase E. Consequently, GlmZ is inactivated and unable to activate GlmS synthesis. Under low GlcN6P concentrations, RapZ is sequestered and inactivated by an other regulatory small RNA, GlmY, preventing GlmZ degradation and leading to synthesis of GlmS. This Erwinia tasmaniensis (strain DSM 17950 / CFBP 7177 / CIP 109463 / NCPPB 4357 / Et1/99) protein is RNase adapter protein RapZ.